The primary structure comprises 120 residues: Large ribosomal subunit protein bL12 (120 aa).

Belongs to the bacterial ribosomal protein bL12 family. Homodimer. Part of the ribosomal stalk of the 50S ribosomal subunit. Forms a multimeric L10(L12)X complex, where L10 forms an elongated spine to which 2 to 4 L12 dimers bind in a sequential fashion. Binds GTP-bound translation factors.

Forms part of the ribosomal stalk which helps the ribosome interact with GTP-bound translation factors. Is thus essential for accurate translation. The protein is Large ribosomal subunit protein bL12 of Lachnoclostridium phytofermentans (strain ATCC 700394 / DSM 18823 / ISDg) (Clostridium phytofermentans).